A 1378-amino-acid chain; its full sequence is MQVNDGPSSHPIFVAPVNGNAQRSSGYVPGRIVPVRSPPPAKAPPPPPLKPPVPPPARPSVFNLSEDGNRREQAQNQQRKNTYICVGIFFGIFLLILILVLSLTSKDVLDENCPHQNPALRSWKPGHDLKKVVVIHSGEHYRLDSSATLYSITIQAGGSVVFADDKKGSKNITLRTRHILIEDGGALHIGAPKCRYRSLATITLVGRSDETAVTEVPGMGRKFLGVNSGGTLELHGSERMSWTFLTRTVPASGLATGDHAFQKNFSRGINLRVVDQDTAEVLVNERFDTHESQDDSKRLGELLKALPAGRIVALATGDSAVKNLVFETKQTIHDLLGSNYISDLKYRDAWALVSVIGGGNGSCTEDVREHENHDTGGKALARQDFFTVDGVGFTVTAYSEWSNGYPTTGFQVDAVDKVVLNLQDDVSSWNPGDRIVVASTDYSMYQAEEFTLLPCPNCNRKQVQIQGKPQFSHVGEILDGVDMRAEVALLSRNILIHGEMENSCYGGNWCQYFSYDTFGGHIKILGNFTSVHLSHIELKHMGQQREKGRYPLNFHRCGDVDQSGGYSNPAYVDSLSIHHSFSRCVTVHATNGLLVKDTVGYDTLGHCFFLKDGIEQRNIFFHNLGLLTRPGTILPTDRNDSMCTEITDRVYKGYIPIPANECKAVSSFWIAHPNNHLISNSAAGSQDAGIWYVFHNSSTGDSHGMISETKAELTPLGTFFNNRVHSNFKAGLFIDRKVKSTNATAADPREYLCLDNSARFRPHESSDPSRPRVAAIIDTLISFKNNDLGAWIRGGDIIIRNSGDGSYPKDEGSSQEVSQSLFIGESRNRGTNGGQNKYWGIGGVDGKMRTLPRNKTFPIRGFQINDGPVRIFDSTFRAFSPTADRFTMAVGFSLKNIWQLTPRNNLSALAFHPSVTLRAFFGRPGDWFEQNDLDGDKNSIFHDLDGSISGYADTYVARADNFLIRHPQCVDMPQWNGVVCSGKYSQVYIQTQAASNLSLSISRDEYPDKPMVLRGIRTKTSPSQQYQPVLMMGKSYTMHWNGPAPRETVLSLINFDQDDWALLGLCYPNETVFQITSDIYNKQNNGFEGIEDYGPVTSIADLEKRQQERKYFFDKSAGLLWLYARARHRRDGNSYCSSAGCERVKIIATIRANQKTETCNCTANAYPKYSKPASNIVPMPKPNTEPCGACGASQFAFSSDPWNSYLQTQIKSLSVKEEQDNDTQAYITVNAQRFDLSQSGFLLVTVDACSGKVTKNSMFSSLDTKMEQFFKTGIMKRSIVLLATRGQPASFAGVAQYLESLGSAKTPDLQNKVAIAFFGFLGQGGPSPQPWSTLLTCQGAKILGLQERFIPLSLEEYSCPPKKDSPTRMDLELLKKIS.

The tract at residues 1–77 (MQVNDGPSSH…GNRREQAQNQ (77 aa)) is disordered. Residues 1–82 (MQVNDGPSSH…QAQNQQRKNT (82 aa)) lie on the Cytoplasmic side of the membrane. Residues 36–58 (RSPPPAKAPPPPPLKPPVPPPAR) are compositionally biased toward pro residues. Residues 83–103 (YICVGIFFGIFLLILILVLSL) traverse the membrane as a helical; Signal-anchor for type II membrane protein segment. Over 104–1378 (TSKDVLDENC…MDLELLKKIS (1275 aa)) the chain is Extracellular. The 127-residue stretch at 121–247 (RSWKPGHDLK…ERMSWTFLTR (127 aa)) folds into the G8 domain. N-linked (GlcNAc...) asparagine glycosylation is found at N171, N264, N360, N527, and N639. The GG-type lectin 1 domain maps to 257–414 (GDHAFQKNFS…YPTTGFQVDA (158 aa)). One copy of the PbH1 1 repeat lies at 672 to 694 (HPNNHLISNSAAGSQDAGIWYVF). N-linked (GlcNAc...) asparagine glycosylation occurs at N696. Residues 714-736 (TPLGTFFNNRVHSNFKAGLFIDR) form a PbH1 2 repeat. N742, N854, N905, N996, N1069, N1160, and N1221 each carry an N-linked (GlcNAc...) asparagine glycan. A GG-type lectin 2 domain is found at 1203–1363 (NSYLQTQIKS…LEEYSCPPKK (161 aa)).

This sequence belongs to the CEMIP family. Ca(2+) serves as cofactor.

The protein resides in the cell membrane. It carries out the reaction Random hydrolysis of (1-&gt;4)-linkages between N-acetyl-beta-D-glucosamine and D-glucuronate residues in hyaluronate.. In terms of biological role, cell surface hyaluronidase that mediates the initial cleavage of extracellular high-molecular-weight hyaluronan into intermediate-size hyaluronan. Acts as a regulator of angiogenesis in embryos by mediating degradation of extracellular hyaluronan, thereby promoting VEGF signaling. Acts as a regulator of heart development during myocardial and endocardial morphogenesis: involved in the looping stage of heart morphogenesis. Stimulates migration of endocardial cells and increases both myocardial and endocardial fusion. Involved in the restriction of endocardial cushions (ECs) formation to the atrioventricular canal (AVC). Also required for muscle fiber attachment. Is very specific to hyaluronan; not able to cleave chondroitin sulfate or dermatan sulfate. This Danio rerio (Zebrafish) protein is Cell surface hyaluronidase (cemip2).